The sequence spans 362 residues: Histidinol-phosphate aminotransferase 2 (362 aa).

Lysine 222 bears the N6-(pyridoxal phosphate)lysine mark.

The protein belongs to the class-II pyridoxal-phosphate-dependent aminotransferase family. Histidinol-phosphate aminotransferase subfamily. In terms of assembly, homodimer. It depends on pyridoxal 5'-phosphate as a cofactor.

It carries out the reaction L-histidinol phosphate + 2-oxoglutarate = 3-(imidazol-4-yl)-2-oxopropyl phosphate + L-glutamate. The protein operates within amino-acid biosynthesis; L-histidine biosynthesis; L-histidine from 5-phospho-alpha-D-ribose 1-diphosphate: step 7/9. The chain is Histidinol-phosphate aminotransferase 2 from Carboxydothermus hydrogenoformans (strain ATCC BAA-161 / DSM 6008 / Z-2901).